We begin with the raw amino-acid sequence, 219 residues long: Large ribosomal subunit protein uL3 (219 aa).

Belongs to the universal ribosomal protein uL3 family. As to quaternary structure, part of the 50S ribosomal subunit. Forms a cluster with proteins L14 and L19.

In terms of biological role, one of the primary rRNA binding proteins, it binds directly near the 3'-end of the 23S rRNA, where it nucleates assembly of the 50S subunit. The sequence is that of Large ribosomal subunit protein uL3 from Salinispora tropica (strain ATCC BAA-916 / DSM 44818 / JCM 13857 / NBRC 105044 / CNB-440).